The primary structure comprises 406 residues: Lymphocyte transmembrane adapter 1 (406 aa).

The segment at 1–25 (MYTTPAPPEITRRSSEPSTQQGTLG) is disordered. Residues 1–33 (MYTTPAPPEITRRSSEPSTQQGTLGSLEGEKGH) lie on the Extracellular side of the membrane. The helical; Signal-anchor for type III membrane protein transmembrane segment at 34–54 (LLFPGFVVLVTIFLVVIVTCI) threads the bilayer. The Cytoplasmic segment spans residues 55 to 406 (LWSRKKQKKR…LATETSGEEV (352 aa)). A disordered region spans residues 109–131 (ESLLSRASDSPEPEVPQASGSLQ). Tyr184 is modified (phosphotyrosine). A disordered region spans residues 219-258 (AEGGHAGCGKATDRTGVWAPGLQGSNSLSEGDDSSQSSND). A compositionally biased stretch (low complexity) spans 242–258 (GSNSLSEGDDSSQSSND). A phosphotyrosine mark is found at Tyr259, Tyr285, and Tyr352. The tract at residues 358 to 406 (PELEGKDWKQGPGTWHPSDERTPSDQAGKFCEAVYPAGSLATETSGEEV) is disordered.

As to quaternary structure, when phosphorylated, interacts with GRB2, PIK3R1 and GRAP2. Phosphorylated on tyrosines upon TCR or BCR activation; which leads to the recruitment of GRB2, PIK3R1 and GRAP2.

The protein resides in the cell membrane. Its function is as follows. Negatively regulates TCR (T-cell antigen receptor)-mediated signaling in T-cells and BCR (B-cell antigen receptor)-mediated signaling in B-cells. The sequence is that of Lymphocyte transmembrane adapter 1 (Lax1) from Rattus norvegicus (Rat).